A 1189-amino-acid chain; its full sequence is Lysine-specific demethylase hairless (1189 aa).

Disordered regions lie at residues 1-40, 236-257, 349-377, 414-480, and 505-552; these read MEST…HHGP, HLQR…EMGA, EGGA…SHHT, AGSP…LQDP, and GEGG…RLST. Positions 239-254 are enriched in basic and acidic residues; it reads RAGEAERPSLHQRDGE. Residues 457–469 show a composition bias toward basic and acidic residues; the sequence is KDVDSGQHDEQKG. The LXXLL motif 1 signature appears at 566–570; the sequence is LCRLL. A C6-type zinc finger spans residues 600-625; that stretch reads CSRCHHGLFNTHWRCPRCSHRLCVAC. A disordered region spans residues 702-750; sequence GDAGQQKESTQKTPPTPQPSCNGDTHRTKSIKEETPDSAETPAEDRAGR. A compositionally biased stretch (basic and acidic residues) spans 725–736; that stretch reads DTHRTKSIKEET. The LXXLL motif 2 motif lies at 758–762; sequence LCELL. Residues 946 to 1157 form the JmjC domain; that stretch reads DTSRVENLAA…LSAQLCHQGP (212 aa). Residues cysteine 1007, glutamate 1009, and histidine 1125 each contribute to the Fe cation site.

The cofactor is Fe(2+). In terms of tissue distribution, strongest expression of isoforms 1 and 2 is seen in the small intestine, weaker expression in brain and colon, and trace expression is found in liver, pancreas, spleen, thymus, stomach, salivary gland, appendix and trachea. Isoform 1 is always the most abundant. Isoform 1 is exclusively expressed at low levels in kidney and testis. Isoform 2 is exclusively expressed at high levels in the skin.

Its subcellular location is the nucleus. The catalysed reaction is N(6),N(6)-dimethyl-L-lysyl(9)-[histone H3] + 2 2-oxoglutarate + 2 O2 = L-lysyl(9)-[histone H3] + 2 formaldehyde + 2 succinate + 2 CO2. Its function is as follows. Histone demethylase that specifically demethylates both mono- and dimethylated 'Lys-9' of histone H3. May act as a transcription regulator controlling hair biology (via targeting of collagens), neural activity, and cell cycle. This is Lysine-specific demethylase hairless (HR) from Homo sapiens (Human).